A 568-amino-acid chain; its full sequence is Keratin, type I cytoskeletal 10 (568 aa).

Positions 1–15 are enriched in low complexity; the sequence is MSVRYSSSKQYSSSR. The tract at residues 1 to 31 is disordered; that stretch reads MSVRYSSSKQYSSSRSGGGGGGGGGSSFRIS. Positions 1–135 are head; sequence MSVRYSSSKQ…GGDGGLLSGN (135 aa). Phosphoserine is present on residues Ser14, Ser16, Ser36, Ser47, Ser50, and Ser160. Residues 16–26 show a composition bias toward gly residues; sequence SGGGGGGGGGS. The tract at residues 136-171 is coil 1A; that stretch reads EKVTMQNLNDRLASYLDKVRALEESNYELEGKIKEW. An IF rod domain is found at 136–450; that stretch reads EKVTMQNLND…SLLEGEGSSG (315 aa). Positions 172–192 are linker 1; it reads YEKHGNSSQRAPRDYSKYYQT. Positions 193–284 are coil 1B; it reads IEDLKNQILN…KNHEEEMRDL (92 aa). Residues 285-307 are linker 12; sequence QNVSTGDVNVEMNAAPGVDLTEL. Positions 308 to 446 are coil 2; sequence LNNMRNQYEQ…QTYRSLLEGE (139 aa). Residues 447–568 form a tail region; the sequence is GSSGGGGYGG…GESSSKGPRY (122 aa). Positions 485-546 are enriched in gly residues; it reads GGGSSGGGGH…GGGYGGGSSS (62 aa). Positions 485-568 are disordered; that stretch reads GGGSSGGGGH…GESSSKGPRY (84 aa). The segment covering 547–568 has biased composition (low complexity); sequence SGGHKSSSSGSVGESSSKGPRY.

The protein belongs to the intermediate filament family. As to quaternary structure, heterotetramer of two type I and two type II keratins. Heterodimer with KRT1. Two heterodimers of KRT1 and KRT10 form a heterotetramer. The KRT10 subunit in the heterotetramer is probably disulfide-linked. In terms of tissue distribution, expressed in skin.

It is found in the secreted. The protein localises to the extracellular space. The protein resides in the cell surface. Its subcellular location is the cytoplasm. In terms of biological role, plays a role in the establishment of the epidermal barrier on plantar skin. Involved in the maintenance of cell layer development and keratin filament bundles in suprabasal cells of the epithelium. In Canis lupus familiaris (Dog), this protein is Keratin, type I cytoskeletal 10.